The primary structure comprises 389 residues: Gustatory receptor for bitter taste 22e (389 aa).

Residues M1–T14 are Cytoplasmic-facing. Residues G15–Y35 form a helical membrane-spanning segment. Over D36–K46 the chain is Extracellular. The helical transmembrane segment at W47 to D67 threads the bilayer. The Cytoplasmic portion of the chain corresponds to T68–R142. The chain crosses the membrane as a helical span at residues F143 to L163. At G164 to S170 the chain is on the extracellular side. N-linked (GlcNAc...) asparagine glycosylation is present at N168. A helical membrane pass occupies residues A171–A191. Over S192–Q254 the chain is Cytoplasmic. A helical membrane pass occupies residues M255–I275. Over Y276–K287 the chain is Extracellular. N-linked (GlcNAc...) asparagine glycosylation is present at N281. The helical transmembrane segment at I288 to I308 threads the bilayer. At C309–M366 the chain is on the cytoplasmic side. Residues G367–W387 form a helical membrane-spanning segment. The Extracellular portion of the chain corresponds to N388–L389.

The protein belongs to the insect chemoreceptor superfamily. Gustatory receptor (GR) family. Gr22e subfamily. As to expression, taste bristles on the labial palp, labral and cibarial sense organs, chemosensory bristles on the leg and anterior wing margin. In larvae, is expressed in neurons of the terminal external chemosensory organ and in the dorsal pharyngeal sense organ. Neurons expressing Gr22e also express Gr66a and correspond to taste neurons that mediate sensitivity to bitter compounds.

The protein localises to the cell membrane. Functionally, gustatory receptor which mediates acceptance or avoidance behavior, depending on its substrates. Seems to be involved in the sensing of bitter taste since it is expressed in neurons that mediate sensitivity to bitter compounds which are also avoidance-type taste neurons. This chain is Gustatory receptor for bitter taste 22e (Gr22e), found in Drosophila melanogaster (Fruit fly).